Here is a 514-residue protein sequence, read N- to C-terminus: tRNA-2-methylthio-N(6)-dimethylallyladenosine synthase (514 aa).

The region spanning Arg68–Leu186 is the MTTase N-terminal domain. Cys77, Cys113, Cys147, Cys223, Cys227, and Cys230 together coordinate [4Fe-4S] cluster. The 231-residue stretch at Arg209–Gln439 folds into the Radical SAM core domain. The region spanning Ser442 to Gln505 is the TRAM domain.

This sequence belongs to the methylthiotransferase family. MiaB subfamily. As to quaternary structure, monomer. The cofactor is [4Fe-4S] cluster.

The protein resides in the cytoplasm. It catalyses the reaction N(6)-dimethylallyladenosine(37) in tRNA + (sulfur carrier)-SH + AH2 + 2 S-adenosyl-L-methionine = 2-methylsulfanyl-N(6)-dimethylallyladenosine(37) in tRNA + (sulfur carrier)-H + 5'-deoxyadenosine + L-methionine + A + S-adenosyl-L-homocysteine + 2 H(+). Functionally, catalyzes the methylthiolation of N6-(dimethylallyl)adenosine (i(6)A), leading to the formation of 2-methylthio-N6-(dimethylallyl)adenosine (ms(2)i(6)A) at position 37 in tRNAs that read codons beginning with uridine. The polypeptide is tRNA-2-methylthio-N(6)-dimethylallyladenosine synthase (Staphylococcus epidermidis (strain ATCC 35984 / DSM 28319 / BCRC 17069 / CCUG 31568 / BM 3577 / RP62A)).